The primary structure comprises 378 residues: Putative gustatory receptor 22f (378 aa).

Residues 1–13 (MKMFQPRRGFSCH) are Cytoplasmic-facing. Residues 14–34 (LAWFMLQTTLYASWLLGLFPF) traverse the membrane as a helical segment. The Extracellular portion of the chain corresponds to 35 to 48 (TFDSRRKQLKRSRW). A helical membrane pass occupies residues 49–69 (LLLYGFVLHSLAMCLAMSSHL). The Cytoplasmic portion of the chain corresponds to 70-88 (ASKQRRKYNAFERNPLLEK). A helical transmembrane segment spans residues 89–109 (IYMQFQVTTFFTISVLLLMNV). The Extracellular portion of the chain corresponds to 110–143 (WKSNTVRKIANELLTLEGQVKDLLTLKNCPNFNC). Residues 144-164 (FVIKKHVAAIGQFVISIYFCL) traverse the membrane as a helical segment. The Cytoplasmic portion of the chain corresponds to 165-178 (CQENSYPKILKILC). The chain crosses the membrane as a helical span at residues 179–199 (CLPSVGLQLIIMHFHTEIILV). Over 200–245 (YRYVWLVNETLEDSHHLSSSRIHALASLYDRLLKLSELVVACNDLQ) the chain is Extracellular. An N-linked (GlcNAc...) asparagine glycan is attached at Asn207. Residues 246 to 266 (LILMLIIYLIGNTVQIFFLIV) form a helical membrane-spanning segment. Topologically, residues 267-354 (LGVSMNKRYI…LCGLFSINHN (88 aa)) are cytoplasmic. A helical membrane pass occupies residues 355–375 (MGFQMIITSFLYLVYLLQFDF). Residues 376-378 (MNL) are Extracellular-facing.

This sequence belongs to the insect chemoreceptor superfamily. Gustatory receptor (GR) family. Gr22e subfamily. Taste bristles in the foreleg and labial palps.

It localises to the cell membrane. Its function is as follows. Probable gustatory receptor which mediates acceptance or avoidance behavior, depending on its substrates. In Drosophila melanogaster (Fruit fly), this protein is Putative gustatory receptor 22f (Gr22f).